The primary structure comprises 981 residues: Bifunctional glutamine synthetase adenylyltransferase/adenylyl-removing enzyme (981 aa).

An adenylyl removase region spans residues 1 to 473 (MTMPLPSIEQ…RSVFNNLIGF (473 aa)). The adenylyl transferase stretch occupies residues 479–981 (ADDSDNAWSD…HQIWQKLFFE (503 aa)).

Belongs to the GlnE family. The cofactor is Mg(2+).

The catalysed reaction is [glutamine synthetase]-O(4)-(5'-adenylyl)-L-tyrosine + phosphate = [glutamine synthetase]-L-tyrosine + ADP. It catalyses the reaction [glutamine synthetase]-L-tyrosine + ATP = [glutamine synthetase]-O(4)-(5'-adenylyl)-L-tyrosine + diphosphate. Involved in the regulation of glutamine synthetase GlnA, a key enzyme in the process to assimilate ammonia. When cellular nitrogen levels are high, the C-terminal adenylyl transferase (AT) inactivates GlnA by covalent transfer of an adenylyl group from ATP to specific tyrosine residue of GlnA, thus reducing its activity. Conversely, when nitrogen levels are low, the N-terminal adenylyl removase (AR) activates GlnA by removing the adenylyl group by phosphorolysis, increasing its activity. The regulatory region of GlnE binds the signal transduction protein PII (GlnB) which indicates the nitrogen status of the cell. This chain is Bifunctional glutamine synthetase adenylyltransferase/adenylyl-removing enzyme, found in Mannheimia succiniciproducens (strain KCTC 0769BP / MBEL55E).